The chain runs to 242 residues: Small ribosomal subunit protein eS1 (242 aa).

The protein belongs to the eukaryotic ribosomal protein eS1 family. As to quaternary structure, component of the small ribosomal subunit. Mature ribosomes consist of a small (40S) and a large (60S) subunit. The 40S subunit contains about 33 different proteins and 1 molecule of RNA (18S). The 60S subunit contains about 49 different proteins and 3 molecules of RNA (25S, 5.8S and 5S).

The protein resides in the cytoplasm. The protein is Small ribosomal subunit protein eS1 of Lodderomyces elongisporus (strain ATCC 11503 / CBS 2605 / JCM 1781 / NBRC 1676 / NRRL YB-4239) (Yeast).